A 138-amino-acid chain; its full sequence is Secreted RxLR effector protein 91 (138 aa).

The signal sequence occupies residues 1–18; that stretch reads MVIPHIICLPMALHLWTC. The RxLR motif lies at 34-37; sequence RRLR. The N-linked (GlcNAc...) asparagine glycan is linked to asparagine 93.

The protein belongs to the RxLR effector family.

The protein localises to the secreted. The protein resides in the host nucleus. Secreted effector that completely suppresses the host cell death induced by cell death-inducing proteins. In Plasmopara viticola (Downy mildew of grapevine), this protein is Secreted RxLR effector protein 91.